A 503-amino-acid chain; its full sequence is Annexin A11 (503 aa).

Composition is skewed to pro residues over residues 1–17, 80–145, and 155–169; these read MSYP…PPAP, GYPP…PYPG, and SPVP…PSYP. Disordered regions lie at residues 1–35 and 56–178; these read MSYP…MPPI and AANM…GTVT. Annexin repeat units lie at residues 198–269, 270–341, 353–425, and 429–500; these read FDPL…ALMK, TPIL…SLSQ, SLVQ…AVVK, and NTPA…KICG. N6-acetyllysine is present on residues Lys246 and Lys253. Lys477 carries the N6-acetyllysine modification.

It belongs to the annexin family. Interacts with PDCD6 in a calcium-dependent manner. Interacts with KIF23 during cytokinesis. Interacts with S100A6.

The protein resides in the cytoplasm. It is found in the melanosome. The protein localises to the nucleus envelope. Its subcellular location is the nucleus. It localises to the nucleoplasm. The protein resides in the cytoskeleton. It is found in the spindle. In terms of biological role, required for midbody formation and completion of the terminal phase of cytokinesis. Binds specifically to calcyclin in a calcium-dependent manner. This Oryctolagus cuniculus (Rabbit) protein is Annexin A11 (ANXA11).